We begin with the raw amino-acid sequence, 83 residues long: uncharacterized protein (83 aa).

This is an uncharacterized protein from Methanocaldococcus jannaschii (strain ATCC 43067 / DSM 2661 / JAL-1 / JCM 10045 / NBRC 100440) (Methanococcus jannaschii).